The sequence spans 334 residues: MEKDALEVRLKSIRHSLDKNTKLLPGKYRNTLGERLITKWRYKKKSHNGSSMLPEKCKSHVQLYDDLVQESSKHFVGFRLHDLRALLKRICSIQNYTRHVLIEWDVRWVNPLTLASKGWEPYQSASQSQVPFKCCCCHAIMTIPLLKNGDDVADYTMKLNEKIWNSNIIGNHLQKCPWRENQVDLNKEYYLSSQNLIREIERIHTEIDRIVSGSNEFSLKRNSSRIFHYLSEKEIQKLAFFFDCKDYSLVGLLLLGYTKFQKDDLVQCTACFHRASLKKLEYTEFNGHALWCRYYNKELLPTMLLELIGKEDKLITKLGVGERLNKLEAVLQTL.

Interacts with MLP1 and MLP2.

The protein resides in the nucleus membrane. Involved in the nuclear retention of improperly spliced pre-mRNAs. In Saccharomyces cerevisiae (strain ATCC 204508 / S288c) (Baker's yeast), this protein is Pre-mRNA leakage protein 39 (PML39).